The following is an 885-amino-acid chain: Alanine--tRNA ligase (885 aa).

Positions 564, 568, 676, and 680 each coordinate Zn(2+).

Belongs to the class-II aminoacyl-tRNA synthetase family. It depends on Zn(2+) as a cofactor.

Its subcellular location is the cytoplasm. The catalysed reaction is tRNA(Ala) + L-alanine + ATP = L-alanyl-tRNA(Ala) + AMP + diphosphate. In terms of biological role, catalyzes the attachment of alanine to tRNA(Ala) in a two-step reaction: alanine is first activated by ATP to form Ala-AMP and then transferred to the acceptor end of tRNA(Ala). Also edits incorrectly charged Ser-tRNA(Ala) and Gly-tRNA(Ala) via its editing domain. The chain is Alanine--tRNA ligase from Brucella abortus (strain 2308).